Here is a 106-residue protein sequence, read N- to C-terminus: Biogenesis of lysosome-related organelles complex 1 subunit BLS1 (106 aa).

This sequence belongs to the BLOC1S1 family. In terms of assembly, component of the biogenesis of lysosome-related organelles complex-1 (BLOC-1).

The protein localises to the endosome. Its function is as follows. Component of the biogenesis of lysosome-related organelles complex-1 (BLOC-1), a complex involved in endosomal cargo sorting. The chain is Biogenesis of lysosome-related organelles complex 1 subunit BLS1 (BLS1) from Candida glabrata (strain ATCC 2001 / BCRC 20586 / JCM 3761 / NBRC 0622 / NRRL Y-65 / CBS 138) (Yeast).